Consider the following 110-residue polypeptide: Senescence associated gene 20 (110 aa).

This Arabidopsis thaliana (Mouse-ear cress) protein is Senescence associated gene 20.